Consider the following 107-residue polypeptide: Phosphoribosyl-ATP pyrophosphatase (107 aa).

This sequence belongs to the PRA-PH family.

The protein localises to the cytoplasm. The catalysed reaction is 1-(5-phospho-beta-D-ribosyl)-ATP + H2O = 1-(5-phospho-beta-D-ribosyl)-5'-AMP + diphosphate + H(+). It participates in amino-acid biosynthesis; L-histidine biosynthesis; L-histidine from 5-phospho-alpha-D-ribose 1-diphosphate: step 2/9. The chain is Phosphoribosyl-ATP pyrophosphatase from Bacillus cytotoxicus (strain DSM 22905 / CIP 110041 / 391-98 / NVH 391-98).